A 163-amino-acid polypeptide reads, in one-letter code: Secreted RxLR effector protein 135 (163 aa).

The signal sequence occupies residues methionine 1–glycine 20. The RxLR-dEER signature appears at arginine 33 to arginine 45. A disordered region spans residues lysine 94–glycine 127.

Belongs to the RxLR effector family.

The protein localises to the secreted. Its subcellular location is the host nucleus. It is found in the host cytoplasm. Functionally, secreted effector that completely suppresses the host cell death induced by cell death-inducing proteins. The chain is Secreted RxLR effector protein 135 from Plasmopara viticola (Downy mildew of grapevine).